Here is a 533-residue protein sequence, read N- to C-terminus: Metal transporter nramp1 homolog (533 aa).

Residues 1–33 form a disordered region; it reads MTPRIESEESAPLVNKNNNNNNDNNNNNNVDEE. Topologically, residues 1-68 are cytoplasmic; that stretch reads MTPRIESEES…PNIDKPDSKW (68 aa). Residues 14 to 29 show a composition bias toward low complexity; that stretch reads VNKNNNNNNDNNNNNN. The chain crosses the membrane as a helical span at residues 69-89; that stretch reads INFKTLWAFTGPGFLMSIAYL. Residues 90 to 101 lie on the Extracellular side of the membrane; that stretch reads DPGNLESDIQAG. Residues 102 to 122 form a helical membrane-spanning segment; sequence AMAGYQLLWVLFWSTVIGFWL. The Cytoplasmic portion of the chain corresponds to 123–158; sequence QMLASRLGVVTGKHLAEHCREQYPKTPRLLLWLMTE. A helical transmembrane segment spans residues 159-179; the sequence is LAIIGSDIQEVIGTAIALQIL. At 180–182 the chain is on the extracellular side; that stretch reads SNG. The chain crosses the membrane as a helical span at residues 183-203; sequence HIPLWAGVLFTAADTFTFLFL. Over 204–212 the chain is Cytoplasmic; it reads EKYGIRKLE. Residues 213-233 traverse the membrane as a helical segment; that stretch reads AFFCSLIAIMAISFGVEYIIS. At 234–256 the chain is on the extracellular side; sequence KPDQIEVVKGVFIPLCSQNNISQ. The N-linked (GlcNAc...) asparagine glycan is linked to asparagine 253. Residues 257-277 form a helical membrane-spanning segment; sequence AVGILGAVVMPHNIYLHSALV. Over 278–302 the chain is Cytoplasmic; the sequence is QSREIDRKSETQVKIANKYNRLESA. The helical transmembrane segment at 303-323 threads the bilayer; sequence FALIISFIINLLLVSVFAKGF. The Extracellular segment spans residues 324-348; the sequence is YGETTEIGLSSAADFLMDKYGKVAK. A helical transmembrane segment spans residues 349-368; it reads YIWAIGLFSAGQCSTMTGTY. Residues 369–387 are Cytoplasmic-facing; sequence SGQFVMEGFLKLKIAPWKR. The chain crosses the membrane as a helical span at residues 388–408; it reads LLITRCTAIVPAMVVAILSTS. The Extracellular segment spans residues 409–415; that stretch reads HLDSLDQ. Residues 416-436 traverse the membrane as a helical segment; it reads WLNILQSIQLPFAVVPVLLFT. The Cytoplasmic portion of the chain corresponds to 437 to 457; that stretch reads SSEKIMGSKFKNHWLNNQFVR. The chain crosses the membrane as a helical span at residues 458 to 478; the sequence is FLSLLIIAINIYLIITFSMQI. Residues 479–481 are Extracellular-facing; it reads SES. Residues 482-502 traverse the membrane as a helical segment; the sequence is AWMISIVSISFFFYFIFIVYL. Over 503–533 the chain is Cytoplasmic; sequence SMGQENFNSMTKKIKNLFNNNSNQTYNNINY.

Belongs to the NRAMP family.

The protein resides in the membrane. Its function is as follows. Depletes iron from the phagolysosome in an ATP-dependent process. May rather act as a symporter of protons and metal cations in an ATP-dependent process. Nramp1 overexpression protected cells from L.pneumophila infection. The sequence is that of Metal transporter nramp1 homolog (nramp1) from Dictyostelium discoideum (Social amoeba).